The sequence spans 519 residues: Chromobox protein homolog 2 (519 aa).

A Chromo domain is found at 12-70; the sequence is FAAECILSKRLRKGKLEYLVKWRGWSSKHNSWEPEENILDPRLLLAFQKKEHEKEVQNR. The span at 60–69 shows a compositional bias: basic and acidic residues; sequence KKEHEKEVQN. The tract at residues 60 to 180 is disordered; sequence KKEHEKEVQN…PPEQKAARRP (121 aa). The span at 70–84 shows a compositional bias: basic residues; that stretch reads RKRGKRPRGRPRKHT. The segment at residues 75-87 is a DNA-binding region (a.T hook); that stretch reads RPRGRPRKHTVTS. A compositionally biased stretch (low complexity) spans 103-119; sequence KSKSSSSSSSSTSSSSS. Residues 129–141 show a composition bias toward basic and acidic residues; the sequence is LDSKRGPRGRETH. Glycyl lysine isopeptide (Lys-Gly) (interchain with G-Cter in SUMO2) cross-links involve residues K147 and K154. Positions 164 to 169 match the Nuclear localization signal motif; the sequence is KRGRKP. R248 carries the asymmetric dimethylarginine; alternate modification. R248 is subject to Omega-N-methylarginine; alternate. Disordered stretches follow at residues 295 to 336 and 367 to 464; these read QKGG…LAPT and AIPA…TSLP. S303 is modified (phosphoserine). 2 stretches are compositionally biased toward polar residues: residues 321 to 336 and 384 to 395; these read QRGNHSGSPGAQLAPT and TGANMTNAPTDN. The span at 453-464 shows a compositional bias: low complexity; the sequence is SSDSDPDSTSLP.

As to quaternary structure, component of a PRC1-like complex. The composition of the PRC1 complex may differ between the PRC1 complex in pluripotent embryonic stem cells containing RNF2, CBX7 and PCGF2, and the PRC1 complex in differentiating cells containing RNF2, CBX2, CBX4 and BMI1. Interacts with RING1/RNF2. Interacts (via chromodomain) with histone H3K9Me3 and H3K27me3. May interact with H3C15 and H3C1. As to expression, expressed in embryoid bodies.

The protein localises to the nucleus speckle. The protein resides in the chromosome. Its function is as follows. Component of a Polycomb group (PcG) multiprotein PRC1-like complex, a complex class required to maintain the transcriptionally repressive state of many genes, including Hox genes, throughout development. PcG PRC1 complex acts via chromatin remodeling and modification of histones; it mediates monoubiquitination of histone H2A 'Lys-119', rendering chromatin heritably changed in its expressibility. Binds to histone H3 trimethylated at 'Lys-9' (H3K9me3) or at 'Lys-27' (H3K27me3). Plays a role in the lineage differentiation of the germ layers in embryonic development. Involved in sexual development, acting as activator of NR5A1 expression. The chain is Chromobox protein homolog 2 (Cbx2) from Mus musculus (Mouse).